The primary structure comprises 505 residues: Cytochrome P450 monooxygenase efuB (505 aa).

The chain crosses the membrane as a helical span at residues 12 to 34 (GFWPTVAGTVATYLFYQIVATVY). Heme is bound at residue cysteine 450.

This sequence belongs to the cytochrome P450 family. Heme is required as a cofactor.

The protein localises to the membrane. The protein operates within secondary metabolite biosynthesis; terpenoid biosynthesis. Its function is as follows. Cytochrome P450 monooxygenase; part of the gene cluster that mediates the biosynthesis of enfumafungin, a glycosylated fernene-type triterpenoid with potent antifungal activity, mediated by its interaction with beta-1,3-glucan synthase and the fungal cell wall. The pathway begins with the terpene cyclase-glycosyl transferase fusion protein that most likely uses 2,3-oxidosqualene as substrate and catalyzes glycosylation immediately after cyclization. The fernene glycoside then could be processed by the desaturase efuI which catalyzes isomerization of a double bond established by efuA to form the core structure. The latter would then undergo a series of hydroxylations in unknown order at C-2, C-19, C-23 and C-25, which would be catalyzed by two of the three cytochrome P450 monooxygenases efuB, efuG or efuH. The hydroxy-group at C-25 becomes oxidized by the dehydrogenase efuE to enable a spontaneous, non-enzymatic hemiacetal formation with C-23. After hydroxylation at C-2, acetylation by the acetyltransferase efuC takes place. The final steps in enfumafungin biosynthesis require expansion of the 5-membered ring by lactonization via a Baeyer-Villiger reaction mediated by one of the BGC's cytochrome P450 monooxygenases (efuB, efuG or efuH) followed by ring cleavage. This type of reaction would establish a double bond between C-20 and C-21 which could be reduced by the reductase efuL to form the final product. The chain is Cytochrome P450 monooxygenase efuB from Hormonema carpetanum.